A 430-amino-acid polypeptide reads, in one-letter code: Long-chain specific acyl-CoA dehydrogenase, mitochondrial (430 aa).

The N-terminal 30 residues, 1–30, are a transit peptide targeting the mitochondrion; sequence MAARLLLRSLRVLSARSATLPPPSARCSHS. Lys42 carries the N6-acetyllysine modification. A phosphoserine mark is found at Ser54 and Ser55. Residues Lys66 and Lys81 each carry the N6-acetyllysine; alternate modification. Lys66 and Lys81 each carry N6-succinyllysine; alternate. An N6-acetyllysine mark is found at Lys92 and Lys95. Residue Lys165 is modified to N6-succinyllysine. 170 to 179 is an FAD binding site; the sequence is IAMTEPGAGS. Residue Ser179 participates in substrate binding. Residue Ser191 is modified to Phosphoserine. 203-205 contacts FAD; the sequence is FIT. Position 227–228 (227–228) interacts with substrate; it reads AH. Lys240 is modified (N6-succinyllysine). Lys254 and Lys279 each carry N6-acetyllysine; alternate. N6-succinyllysine; alternate occurs at positions 254 and 279. Residues Tyr282 and 289-292 contribute to the substrate site; that span reads PQER. The Proton acceptor role is filled by Glu291. Arg317 serves as a coordination point for FAD. The residue at position 318 (Lys318) is an N6-acetyllysine. Lys322 is subject to N6-acetyllysine; alternate. Lys322 is modified (N6-succinyllysine; alternate). FAD is bound at residue Gln328. N6-acetyllysine is present on Lys358. The residue at position 362 (Ser362) is a Phosphoserine. FAD is bound at residue 385 to 389; sequence QLHGG. 412 to 413 lines the substrate pocket; the sequence is GG. FAD is bound at residue 414–416; that stretch reads TNE.

The protein belongs to the acyl-CoA dehydrogenase family. In terms of assembly, homotetramer. FAD is required as a cofactor. Post-translationally, acetylation at Lys-318 and Lys-322 in proximity of the cofactor-binding sites strongly reduces catalytic activity. These sites are deacetylated by SIRT3.

The protein resides in the mitochondrion matrix. The enzyme catalyses a long-chain 2,3-saturated fatty acyl-CoA + oxidized [electron-transfer flavoprotein] + H(+) = a long-chain (2E)-enoyl-CoA + reduced [electron-transfer flavoprotein]. The catalysed reaction is octanoyl-CoA + oxidized [electron-transfer flavoprotein] + H(+) = (2E)-octenoyl-CoA + reduced [electron-transfer flavoprotein]. It catalyses the reaction decanoyl-CoA + oxidized [electron-transfer flavoprotein] + H(+) = (2E)-decenoyl-CoA + reduced [electron-transfer flavoprotein]. It carries out the reaction dodecanoyl-CoA + oxidized [electron-transfer flavoprotein] + H(+) = (2E)-dodecenoyl-CoA + reduced [electron-transfer flavoprotein]. The enzyme catalyses tetradecanoyl-CoA + oxidized [electron-transfer flavoprotein] + H(+) = (2E)-tetradecenoyl-CoA + reduced [electron-transfer flavoprotein]. The catalysed reaction is oxidized [electron-transfer flavoprotein] + hexadecanoyl-CoA + H(+) = (2E)-hexadecenoyl-CoA + reduced [electron-transfer flavoprotein]. It catalyses the reaction octadecanoyl-CoA + oxidized [electron-transfer flavoprotein] + H(+) = (2E)-octadecenoyl-CoA + reduced [electron-transfer flavoprotein]. It carries out the reaction (5E)-tetradecenoyl-CoA + oxidized [electron-transfer flavoprotein] + H(+) = (2E,5E)-tetradecadienoyl-CoA + reduced [electron-transfer flavoprotein]. The enzyme catalyses (5Z)-tetradecenoyl-CoA + oxidized [electron-transfer flavoprotein] + H(+) = (2E,5Z)-tetradecadienoyl-CoA + reduced [electron-transfer flavoprotein]. The catalysed reaction is oxidized [electron-transfer flavoprotein] + (9Z)-octadecenoyl-CoA + H(+) = (2E,9Z)-octadecadienoyl-CoA + reduced [electron-transfer flavoprotein]. It catalyses the reaction hexanoyl-CoA + oxidized [electron-transfer flavoprotein] + H(+) = (2E)-hexenoyl-CoA + reduced [electron-transfer flavoprotein]. It carries out the reaction eicosanoyl-CoA + oxidized [electron-transfer flavoprotein] + H(+) = (2E)-eicosenoyl-CoA + reduced [electron-transfer flavoprotein]. The enzyme catalyses docosanoyl-CoA + oxidized [electron-transfer flavoprotein] + H(+) = (2E)-docosenoyl-CoA + reduced [electron-transfer flavoprotein]. The catalysed reaction is tetracosanoyl-CoA + oxidized [electron-transfer flavoprotein] + H(+) = (2E)-tetracosenoyl-CoA + reduced [electron-transfer flavoprotein]. It participates in lipid metabolism; mitochondrial fatty acid beta-oxidation. With respect to regulation, inhibited by crotonyl-CoA, 2-octenoyl-CoA and 2-hexadecenoyl-CoA. Functionally, long-chain specific acyl-CoA dehydrogenase is one of the acyl-CoA dehydrogenases that catalyze the first step of mitochondrial fatty acid beta-oxidation, an aerobic process breaking down fatty acids into acetyl-CoA and allowing the production of energy from fats. The first step of fatty acid beta-oxidation consists in the removal of one hydrogen from C-2 and C-3 of the straight-chain fatty acyl-CoA thioester, resulting in the formation of trans-2-enoyl-CoA. Among the different mitochondrial acyl-CoA dehydrogenases, long-chain specific acyl-CoA dehydrogenase can act on saturated and unsaturated acyl-CoAs with 6 to 24 carbons with a preference for 8 to 18 carbons long primary chains. In Rattus norvegicus (Rat), this protein is Long-chain specific acyl-CoA dehydrogenase, mitochondrial.